A 137-amino-acid chain; its full sequence is Small ribosomal subunit protein uS12 (137 aa).

The segment at 1 to 57 (MPTINQLVRKPRQSKSKKSDSPVLNRGFNSKKKQFTNLNSPQKRGVCTRVGTMTPRK) is disordered. D102 is subject to 3-methylthioaspartic acid. Residues 118 to 137 (SGVDGRRQGRSLYGTKKPKN) form a disordered region.

It belongs to the universal ribosomal protein uS12 family. Part of the 30S ribosomal subunit. Contacts proteins S8 and S17. May interact with IF1 in the 30S initiation complex.

In terms of biological role, with S4 and S5 plays an important role in translational accuracy. Interacts with and stabilizes bases of the 16S rRNA that are involved in tRNA selection in the A site and with the mRNA backbone. Located at the interface of the 30S and 50S subunits, it traverses the body of the 30S subunit contacting proteins on the other side and probably holding the rRNA structure together. The combined cluster of proteins S8, S12 and S17 appears to hold together the shoulder and platform of the 30S subunit. The protein is Small ribosomal subunit protein uS12 of Staphylococcus haemolyticus (strain JCSC1435).